Reading from the N-terminus, the 730-residue chain is Heterogeneous nuclear ribonucleoprotein M (730 aa).

Over residues 1–13 the composition is skewed to low complexity; sequence MAAGVEAAAEVAA. The interval 1-62 is disordered; it reads MAAGVEAAAE…NIKRGGNRFE (62 aa). Ala2 carries the N-acetylalanine modification. Residue Lys17 forms a Glycyl lysine isopeptide (Lys-Gly) (interchain with G-Cter in SUMO2) linkage. A Phosphoserine modification is found at Ser29. Lys37 is covalently cross-linked (Glycyl lysine isopeptide (Lys-Gly) (interchain with G-Cter in SUMO2)). Basic and acidic residues predominate over residues 38-50; it reads GEGERPAQNEKRK. Glycyl lysine isopeptide (Lys-Gly) (interchain with G-Cter in SUMO2) cross-links involve residues Lys69 and Lys83. RRM domains follow at residues 71 to 149 and 204 to 281; these read YRAF…EDPD and STVF…MDER. The residue at position 86 (Ser86) is a Phosphoserine. Residues Lys88 and Lys127 each participate in a glycyl lysine isopeptide (Lys-Gly) (interchain with G-Cter in SUMO2) cross-link. At Lys134 the chain carries N6-acetyllysine; alternate. A Glycyl lysine isopeptide (Lys-Gly) (interchain with G-Cter in SUMO2); alternate cross-link involves residue Lys134. Residues Lys143 and Lys145 each participate in a glycyl lysine isopeptide (Lys-Gly) (interchain with G-Cter in SUMO2) cross-link. Ser204 carries the post-translational modification Phosphoserine. A Glycyl lysine isopeptide (Lys-Gly) (interchain with G-Cter in SUMO2) cross-link involves residue Lys221. Lys277 bears the N6-acetyllysine; alternate mark. A Glycyl lysine isopeptide (Lys-Gly) (interchain with G-Cter in SUMO2); alternate cross-link involves residue Lys277. Residues Lys285 and Lys345 each participate in a glycyl lysine isopeptide (Lys-Gly) (interchain with G-Cter in SUMO2) cross-link. 2 positions are modified to phosphoserine: Ser365 and Ser377. Residues Lys381 and Lys388 each participate in a glycyl lysine isopeptide (Lys-Gly) (interchain with G-Cter in SUMO2) cross-link. Ser397 carries the phosphoserine modification. Repeat copies occupy residues 400–405, 407–412, 415–420, and 426–431. Residues 400–608 form a 27 X 6 AA repeats of [GEVSTPAN]-[ILMV]-[DE]-[RH]-[MLVI]-[GAV] region; the sequence is GIERMGPGID…ALGAGIERMG (209 aa). Ser432 is subject to Phosphoserine. Repeat copies occupy residues 433–438, 440–445, and 446–451. Ser452 is subject to Phosphoserine. A run of 4 repeats spans residues 453–458, 461–466, 468–473, and 475–480. Residue Ser468 is modified to Phosphoserine. A Phosphoserine modification is found at Ser481. Repeat copies occupy residues 482 to 487, 493 to 498, 500 to 505, 507 to 512, 514 to 519, 521 to 526, 528 to 533, 540 to 545, 547 to 552, 554 to 559, 562 to 566, 567 to 572, 575 to 579, 580 to 585, 588 to 593, and 603 to 608. The residue at position 496 (Arg496) is an Omega-N-methylarginine. Ser528 carries the phosphoserine modification. The residue at position 575 (Ser575) is a Phosphoserine. Phosphoserine is present on Ser588. Phosphoserine is present on residues Ser618, Ser633, and Ser637. Lys651 is covalently cross-linked (Glycyl lysine isopeptide (Lys-Gly) (interchain with G-Cter in SUMO2)). An RRM 3 domain is found at 653 to 729; that stretch reads CQIFVRNLPF…REIDVRIDRN (77 aa). A Phosphothreonine modification is found at Thr665. Residue Lys667 forms a Glycyl lysine isopeptide (Lys-Gly) (interchain with G-Cter in SUMO2) linkage. At Lys672 the chain carries N6-acetyllysine. Glycyl lysine isopeptide (Lys-Gly) (interchain with G-Cter in SUMO2) cross-links involve residues Lys685 and Lys692. An N6-acetyllysine; alternate modification is found at Lys698. Lys698 is covalently cross-linked (Glycyl lysine isopeptide (Lys-Gly) (interchain with G-Cter in SUMO2); alternate). A Glycyl lysine isopeptide (Lys-Gly) (interchain with G-Cter in SUMO1); alternate cross-link involves residue Lys698. Ser701 carries the post-translational modification Phosphoserine. A Glycyl lysine isopeptide (Lys-Gly) (interchain with G-Cter in SUMO2) cross-link involves residue Lys716.

Identified in the spliceosome C complex. Interacts with PPIA/CYPA. In terms of processing, sumoylated.

The protein localises to the nucleus. It localises to the nucleolus. In terms of biological role, pre-mRNA binding protein in vivo, binds avidly to poly(G) and poly(U) RNA homopolymers in vitro. Involved in splicing. Acts as a receptor for carcinoembryonic antigen in Kupffer cells, may initiate a series of signaling events leading to tyrosine phosphorylation of proteins and induction of IL-1 alpha, IL-6, IL-10 and tumor necrosis factor alpha cytokines. This is Heterogeneous nuclear ribonucleoprotein M (HNRNPM) from Homo sapiens (Human).